The primary structure comprises 433 residues: Epi-neemfruitin B synthase L1AT (433 aa).

Catalysis depends on proton acceptor residues H151 and D372.

Belongs to the plant acyltransferase family. Monomer. In terms of tissue distribution, mainly expressed in petioles and, to a lower extent, in roots.

The catalysed reaction is (21S)-21-acetyl-1-hydroxy-apo-melianone + acetyl-CoA = epi-neemfruitin B + acetate + CoA + H(+). It participates in secondary metabolite biosynthesis; terpenoid biosynthesis. Acetyltransferase involved in the biosynthesis of limonoids triterpene natural products such as azadirachtin, an antifeedant widely used as bioinsecticide, and possessing many medicinal applications including anti-tumoral, anti-malarial, anti-rheumatic, antibacterial, anti-inflammatory, anti-pyretic and diuretic effects. Catalyzes the formation of epi-neemfruitin B from (21S)-21-acetyl-1-hydroxy-apo-melianone. This is Epi-neemfruitin B synthase L1AT from Melia azedarach (Chinaberry tree).